A 545-amino-acid chain; its full sequence is MAAKDVKFGNDARVKMLRGVNVLADAVKVTLGPKGRNVVLDKSFGAPTITKDGVSVAREIELEDKFENMGAQMVKEVASKANDAAGDGTTTATVLAQSIITEGLKAVAAGMNPMDLKRGIDKAVAAAVEELKALSVPCSDSKAIAQVGTISANSDETVGKLIAEAMDKVGKEGVITVEDGTGLQDELDVVEGMQFDRGYLSPYFINKPETGAVELESPFILLADKKISNIREMLPVLEAVAKAGKPLLIIAEDVEGEALATLVVNTMRGIVKVAAVKAPGFGDRRKAMLQDIATLTGGTVISEEIGMELEKATLEDLGQAKRVVINKDTTTIIDGVGEEAAIQGRVAQIRQQIEEATSDYDREKLQERVAKLAGGVAVIKVGAATEVEMKEKKARVEDALHATRAAVEEGVVAGGGVALIRVASKIADLKGQNEDQNVGIKVALRAMEAPLRQIVLNCGEEPSVVANTVKGGDGNYGYNAATEEYGNMIDMGILDPTKVTRSALQYAASVAGLMITTECMVTDLPKSDAPDLGAAGGMGGMGGMM.

ATP contacts are provided by residues 30–33 (TLGP), K51, 87–91 (DGTTT), G415, 479–481 (NAA), and D495.

This sequence belongs to the chaperonin (HSP60) family. As to quaternary structure, forms a cylinder of 14 subunits composed of two heptameric rings stacked back-to-back. Interacts with the co-chaperonin GroES.

The protein resides in the cytoplasm. The catalysed reaction is ATP + H2O + a folded polypeptide = ADP + phosphate + an unfolded polypeptide.. In terms of biological role, together with its co-chaperonin GroES, plays an essential role in assisting protein folding. The GroEL-GroES system forms a nano-cage that allows encapsulation of the non-native substrate proteins and provides a physical environment optimized to promote and accelerate protein folding. The protein is Chaperonin GroEL of Salmonella agona (strain SL483).